Reading from the N-terminus, the 424-residue chain is UPF0597 protein Shew185_3080 (424 aa).

Belongs to the UPF0597 family.

The polypeptide is UPF0597 protein Shew185_3080 (Shewanella baltica (strain OS185)).